A 227-amino-acid polypeptide reads, in one-letter code: MITNAISKIIKYDFKNTQLLNEALTHPSVLSKDNNNFNYERLEFLGDAVLNLVVSEMLFNIFPYDTEGNLAKKKTALVCGTKLVEIAQSINLGIFIIMSDGERSCGGANNSNNLENALEALIGAIYLDGGLKAAKDFIFLFWKNSATHMKVPPQDAKTILQEWAQSKGFPAPSYHIINKSGPDHNPCFTVEVRINSHETLHATGHNKKLAEQKAASLMLAKINYKIK.

Residues 3 to 130 (TNAISKIIKY…LIGAIYLDGG (128 aa)) form the RNase III domain. Glutamate 43 contacts Mg(2+). Aspartate 47 is a catalytic residue. Asparagine 116 and glutamate 119 together coordinate Mg(2+). Glutamate 119 is an active-site residue. Residues 155-224 (DAKTILQEWA…ASLMLAKINY (70 aa)) form the DRBM domain.

Belongs to the ribonuclease III family. Homodimer. Mg(2+) is required as a cofactor.

It is found in the cytoplasm. It catalyses the reaction Endonucleolytic cleavage to 5'-phosphomonoester.. Its function is as follows. Digests double-stranded RNA. Involved in the processing of primary rRNA transcript to yield the immediate precursors to the large and small rRNAs (23S and 16S). Processes some mRNAs, and tRNAs when they are encoded in the rRNA operon. Processes pre-crRNA and tracrRNA of type II CRISPR loci if present in the organism. The protein is Ribonuclease 3 of Ehrlichia ruminantium (strain Gardel).